Here is a 272-residue protein sequence, read N- to C-terminus: Shikimate dehydrogenase (NADP(+)) (272 aa).

Residues 14–16 and Thr-61 each bind shikimate; that span reads SKS. Lys-65 serves as the catalytic Proton acceptor. Glu-77 is an NADP(+) binding site. Residues Asn-86 and Asp-102 each contribute to the shikimate site. Residues 126-130, 149-154, and Met-213 each bind NADP(+); these read GAGGA and NRTVSR. Tyr-215 serves as a coordination point for shikimate. Residue Gly-237 participates in NADP(+) binding.

It belongs to the shikimate dehydrogenase family. In terms of assembly, homodimer.

The catalysed reaction is shikimate + NADP(+) = 3-dehydroshikimate + NADPH + H(+). Its pathway is metabolic intermediate biosynthesis; chorismate biosynthesis; chorismate from D-erythrose 4-phosphate and phosphoenolpyruvate: step 4/7. In terms of biological role, involved in the biosynthesis of the chorismate, which leads to the biosynthesis of aromatic amino acids. Catalyzes the reversible NADPH linked reduction of 3-dehydroshikimate (DHSA) to yield shikimate (SA). In Shigella flexneri, this protein is Shikimate dehydrogenase (NADP(+)).